The primary structure comprises 340 residues: Uroporphyrinogen decarboxylase (340 aa).

Residues arginine 21–arginine 25, aspartate 71, tyrosine 147, serine 202, and histidine 316 each bind substrate.

Belongs to the uroporphyrinogen decarboxylase family. Homodimer.

It localises to the cytoplasm. It carries out the reaction uroporphyrinogen III + 4 H(+) = coproporphyrinogen III + 4 CO2. It participates in porphyrin-containing compound metabolism; protoporphyrin-IX biosynthesis; coproporphyrinogen-III from 5-aminolevulinate: step 4/4. In terms of biological role, catalyzes the decarboxylation of four acetate groups of uroporphyrinogen-III to yield coproporphyrinogen-III. This Nitratiruptor sp. (strain SB155-2) protein is Uroporphyrinogen decarboxylase.